A 298-amino-acid chain; its full sequence is N-acetylmuramic acid 6-phosphate etherase (298 aa).

One can recognise an SIS domain in the interval 55–218 (IHAQVSGGGR…STGLMIKSGK (164 aa)). Catalysis depends on glutamate 83, which acts as the Proton donor. Glutamate 114 is an active-site residue.

The protein belongs to the GCKR-like family. MurNAc-6-P etherase subfamily. Homodimer.

The enzyme catalyses N-acetyl-D-muramate 6-phosphate + H2O = N-acetyl-D-glucosamine 6-phosphate + (R)-lactate. Its pathway is amino-sugar metabolism; N-acetylmuramate degradation. It functions in the pathway amino-sugar metabolism; 1,6-anhydro-N-acetylmuramate degradation. It participates in cell wall biogenesis; peptidoglycan recycling. In terms of biological role, specifically catalyzes the cleavage of the D-lactyl ether substituent of MurNAc 6-phosphate, producing GlcNAc 6-phosphate and D-lactate. Together with AnmK, is also required for the utilization of anhydro-N-acetylmuramic acid (anhMurNAc) either imported from the medium or derived from its own cell wall murein, and thus plays a role in cell wall recycling. This Escherichia coli (strain K12 / MC4100 / BW2952) protein is N-acetylmuramic acid 6-phosphate etherase.